Here is a 115-residue protein sequence, read N- to C-terminus: DNA-binding protein STK_13740 (115 aa).

This sequence belongs to the PDCD5 family.

The protein is DNA-binding protein STK_13740 of Sulfurisphaera tokodaii (strain DSM 16993 / JCM 10545 / NBRC 100140 / 7) (Sulfolobus tokodaii).